The following is a 260-amino-acid chain: Fructose import ATP-binding protein FrcA (260 aa).

The ABC transporter domain maps to 7–251; the sequence is LTARGLVKRY…DAVAFMTGAK (245 aa). 39–46 is an ATP binding site; the sequence is GDNGAGKS.

It belongs to the ABC transporter superfamily. In terms of assembly, the complex is composed of two ATP-binding proteins (FrcA), two transmembrane proteins (FrcC) and a solute-binding protein (FrcB).

It is found in the cell inner membrane. The catalysed reaction is D-fructose(out) + ATP + H2O = D-fructose(in) + ADP + phosphate + H(+). In terms of biological role, part of the high-affinity ABC transporter complex FrcBCA involved in fructose uptake. Is also a high-affinity transporter for ribose and mannose. Responsible for energy coupling to the transport system. The sequence is that of Fructose import ATP-binding protein FrcA from Rhizobium meliloti (Ensifer meliloti).